The following is a 154-amino-acid chain: Superoxide dismutase [Cu-Zn] (154 aa).

Cu cation is bound by residues His-47, His-49, and His-64. An intrachain disulfide couples Cys-58 to Cys-147. Residues 62–89 (GPHFNPFKKNHGGPTDSERHVGDLGNVK) form a disordered region. His-64, His-72, His-81, and Asp-84 together coordinate Zn(2+). Cu cation is bound at residue His-121. Arg-144 is a binding site for substrate.

The protein belongs to the Cu-Zn superoxide dismutase family. As to quaternary structure, homodimer. Cu cation is required as a cofactor. Zn(2+) serves as cofactor.

Its subcellular location is the cytoplasm. The catalysed reaction is 2 superoxide + 2 H(+) = H2O2 + O2. Destroys radicals which are normally produced within the cells and which are toxic to biological systems. The chain is Superoxide dismutase [Cu-Zn] (SOD1) from Yarrowia lipolytica (strain CLIB 122 / E 150) (Yeast).